The sequence spans 516 residues: Ribose import ATP-binding protein RbsA (516 aa).

ABC transporter domains lie at 14 to 250 (LRLT…VGRA) and 261 to 504 (AKGA…AGIG). ATP is bound at residue 46–53 (GENGAGKS).

It belongs to the ABC transporter superfamily. Ribose importer (TC 3.A.1.2.1) family. The complex is composed of an ATP-binding protein (RbsA), two transmembrane proteins (RbsC) and a solute-binding protein (RbsB).

The protein resides in the cell inner membrane. The enzyme catalyses D-ribose(out) + ATP + H2O = D-ribose(in) + ADP + phosphate + H(+). Its function is as follows. Part of the ABC transporter complex RbsABC involved in ribose import. Responsible for energy coupling to the transport system. The sequence is that of Ribose import ATP-binding protein RbsA from Jannaschia sp. (strain CCS1).